The primary structure comprises 39 residues: Protein disulfide-isomerase A3 (39 aa).

Belongs to the protein disulfide isomerase family. Part of the major histocompatibility complex class I (MHC I) peptide loading complex composed of TAP1, TAP2, B2M, MHC heavy chain, TAPBP, PDIA3, and CALR. Interacts with ERP27 and CANX. Interacts with SERPINA2 and with SERPINA1. Interacts with ATP2A2. Post-translationally, within the major histocompatibility complex class I (MHC I) peptide loading complex forms reversible disulfide-linked heterodimers with TAPBP as part of its protein folding chaperone activity. This is essential to assist the dynamic assembly of the MHC I complex with high affinity antigens in the endoplasmic reticulum. In terms of processing, phosphorylated. Predominantly expressed in liver. Low in brain, testis and colon. Not detectable in pancreas and skeletal muscle.

It localises to the endoplasmic reticulum. Its subcellular location is the endoplasmic reticulum lumen. It is found in the melanosome. The catalysed reaction is Catalyzes the rearrangement of -S-S- bonds in proteins.. Protein disulfide isomerase that catalyzes the formation, isomerization, and reduction or oxidation of disulfide bonds in client proteins and functions as a protein folding chaperone. Core component of the major histocompatibility complex class I (MHC I) peptide loading complex where it functions as an essential folding chaperone for TAPBP. Through TAPBP, assists the dynamic assembly of the MHC I complex with high affinity antigens in the endoplasmic reticulum. Therefore, plays a crucial role in the presentation of antigens to cytotoxic T cells in adaptive immunity. This Papio hamadryas (Hamadryas baboon) protein is Protein disulfide-isomerase A3 (PDIA3).